The primary structure comprises 857 residues: Mitogen-activated protein kinase kinase kinase dlk-1 (857 aa).

The Protein kinase domain occupies 62-304; it reads ISNLEWLGSG…FSHIRQHWEI (243 aa). Residues 68–76 and Lys-89 contribute to the ATP site; that span reads LGSGSQGAV. Residue Asp-173 is the Proton acceptor of the active site. 4 disordered regions span residues 441–503, 572–625, 733–775, and 818–857; these read EEMS…ISRN, RIAS…PSRN, NAND…MESE, and HSIKTHRRTSSNPQAIIHQRIEEYSSSATEDSDDAGAVRI. The segment covering 467–488 has biased composition (low complexity); that stretch reads SSGAQSSPFSRQSSCRSSAGQQ. Residues 609-623 are compositionally biased toward polar residues; sequence APRSSSKLNRSSYPS. Over residues 753–762 the composition is skewed to acidic residues; that stretch reads ADVESSEDEG. Residues 763 to 772 are compositionally biased toward polar residues; that stretch reads NGNNILNTSM.

Belongs to the protein kinase superfamily. STE Ser/Thr protein kinase family. MAP kinase kinase kinase subfamily. The cofactor is Mg(2+). Post-translationally, ubiquitinated by rpm-1. Negatively regulated by ubiquitination by fsn-1 bound rpm-1, followed by degradation.

Its subcellular location is the synapse. It carries out the reaction L-seryl-[protein] + ATP = O-phospho-L-seryl-[protein] + ADP + H(+). It catalyses the reaction L-threonyl-[protein] + ATP = O-phospho-L-threonyl-[protein] + ADP + H(+). Component of a MAP kinase pathway that functions presynaptically to regulate synaptic architecture and presynaptic differentiation. Phosphorylates and activates mkk-4. This is Mitogen-activated protein kinase kinase kinase dlk-1 from Caenorhabditis briggsae.